A 465-amino-acid chain; its full sequence is Antithrombin-III (465 aa).

The N-terminal stretch at 1–32 (MYSPGAGSGAAGERKLCLLSLLLIGALGCAIC) is a signal peptide. Cystine bridges form between Cys41/Cys161 and Cys54/Cys128. The residue at position 64 (Thr64) is a Phosphothreonine. Phosphoserine is present on Ser69. Trp82 is a binding site for heparin. The N-linked (GlcNAc...) asparagine glycan is linked to Asn129. Arg162 serves as a coordination point for heparin. Asn168 carries N-linked (GlcNAc...) asparagine glycosylation. Residue Arg178 coordinates heparin. N-linked (GlcNAc...) asparagine glycosylation is found at Asn188 and Asn225. Cys280 and Cys463 are disulfide-bonded.

This sequence belongs to the serpin family. As to quaternary structure, forms protease inhibiting heterodimer with TMPRSS7. Phosphorylated by FAM20C in the extracellular medium. In terms of tissue distribution, plasma.

It is found in the secreted. The protein resides in the extracellular space. Functionally, most important serine protease inhibitor in plasma that regulates the blood coagulation cascade. AT-III inhibits thrombin, matriptase-3/TMPRSS7, as well as factors IXa, Xa and XIa. Its inhibitory activity is greatly enhanced in the presence of heparin. This Mus musculus (Mouse) protein is Antithrombin-III (Serpinc1).